The following is a 336-amino-acid chain: 4-hydroxy-3-methylbut-2-enyl diphosphate reductase (336 aa).

Residue Cys37 coordinates [4Fe-4S] cluster. (2E)-4-hydroxy-3-methylbut-2-enyl diphosphate-binding residues include His66 and His99. Positions 66 and 99 each coordinate dimethylallyl diphosphate. His66 and His99 together coordinate isopentenyl diphosphate. Position 121 (Cys121) interacts with [4Fe-4S] cluster. Residue His149 participates in (2E)-4-hydroxy-3-methylbut-2-enyl diphosphate binding. Residue His149 coordinates dimethylallyl diphosphate. Residue His149 participates in isopentenyl diphosphate binding. The Proton donor role is filled by Glu151. Residue Thr189 coordinates (2E)-4-hydroxy-3-methylbut-2-enyl diphosphate. Cys219 serves as a coordination point for [4Fe-4S] cluster. (2E)-4-hydroxy-3-methylbut-2-enyl diphosphate-binding residues include Ser247, Ser248, Asn249, and Ser292. Residues Ser247, Ser248, Asn249, and Ser292 each coordinate dimethylallyl diphosphate. 4 residues coordinate isopentenyl diphosphate: Ser247, Ser248, Asn249, and Ser292.

Belongs to the IspH family. Requires [4Fe-4S] cluster as cofactor.

It carries out the reaction isopentenyl diphosphate + 2 oxidized [2Fe-2S]-[ferredoxin] + H2O = (2E)-4-hydroxy-3-methylbut-2-enyl diphosphate + 2 reduced [2Fe-2S]-[ferredoxin] + 2 H(+). The enzyme catalyses dimethylallyl diphosphate + 2 oxidized [2Fe-2S]-[ferredoxin] + H2O = (2E)-4-hydroxy-3-methylbut-2-enyl diphosphate + 2 reduced [2Fe-2S]-[ferredoxin] + 2 H(+). It functions in the pathway isoprenoid biosynthesis; dimethylallyl diphosphate biosynthesis; dimethylallyl diphosphate from (2E)-4-hydroxy-3-methylbutenyl diphosphate: step 1/1. Its pathway is isoprenoid biosynthesis; isopentenyl diphosphate biosynthesis via DXP pathway; isopentenyl diphosphate from 1-deoxy-D-xylulose 5-phosphate: step 6/6. Its function is as follows. Catalyzes the conversion of 1-hydroxy-2-methyl-2-(E)-butenyl 4-diphosphate (HMBPP) into a mixture of isopentenyl diphosphate (IPP) and dimethylallyl diphosphate (DMAPP). Acts in the terminal step of the DOXP/MEP pathway for isoprenoid precursor biosynthesis. This is 4-hydroxy-3-methylbut-2-enyl diphosphate reductase from Nocardia farcinica (strain IFM 10152).